Reading from the N-terminus, the 193-residue chain is Segregation and condensation protein B (193 aa).

Belongs to the ScpB family. As to quaternary structure, homodimer. Homodimerization may be required to stabilize the binding of ScpA to the Smc head domains. Component of a cohesin-like complex composed of ScpA, ScpB and the Smc homodimer, in which ScpA and ScpB bind to the head domain of Smc. The presence of the three proteins is required for the association of the complex with DNA.

The protein resides in the cytoplasm. In terms of biological role, participates in chromosomal partition during cell division. May act via the formation of a condensin-like complex containing Smc and ScpA that pull DNA away from mid-cell into both cell halves. The polypeptide is Segregation and condensation protein B (Clostridium botulinum (strain Kyoto / Type A2)).